The following is a 143-amino-acid chain: 3-hydroxyacyl-[acyl-carrier-protein] dehydratase FabZ (143 aa).

His48 is an active-site residue.

The protein belongs to the thioester dehydratase family. FabZ subfamily.

The protein resides in the cytoplasm. The catalysed reaction is a (3R)-hydroxyacyl-[ACP] = a (2E)-enoyl-[ACP] + H2O. Its function is as follows. Involved in unsaturated fatty acids biosynthesis. Catalyzes the dehydration of short chain beta-hydroxyacyl-ACPs and long chain saturated and unsaturated beta-hydroxyacyl-ACPs. In Roseiflexus castenholzii (strain DSM 13941 / HLO8), this protein is 3-hydroxyacyl-[acyl-carrier-protein] dehydratase FabZ.